We begin with the raw amino-acid sequence, 112 residues long: Class I hydrophobin 7 (112 aa).

Positions 1-23 (MFARQATSVSAFLVLTLSLFAAA) are cleaved as a signal peptide. Disulfide bonds link Cys-36–Cys-93, Cys-43–Cys-87, Cys-44–Cys-74, and Cys-94–Cys-107. N-linked (GlcNAc...) asparagine glycosylation occurs at Asn-96.

This sequence belongs to the fungal hydrophobin family. In terms of assembly, self-assembles to form functional amyloid fibrils called rodlets. Self-assembly into fibrillar rodlets occurs spontaneously at hydrophobic:hydrophilic interfaces and the rodlets further associate laterally to form amphipathic monolayers.

It localises to the secreted. Its subcellular location is the cell wall. Its function is as follows. Aerial growth, conidiation, and dispersal of filamentous fungi in the environment rely upon a capability of their secreting small amphipathic proteins called hydrophobins (HPBs) with low sequence identity. Class I can self-assemble into an outermost layer of rodlet bundles on aerial cell surfaces, conferring cellular hydrophobicity that supports fungal growth, development and dispersal; whereas Class II form highly ordered films at water-air interfaces through intermolecular interactions but contribute nothing to the rodlet structure. The polypeptide is Class I hydrophobin 7 (Flammulina velutipes (Agaricus velutipes)).